The sequence spans 491 residues: Probable malate:quinone oxidoreductase (491 aa).

Belongs to the MQO family. FAD serves as cofactor.

The catalysed reaction is (S)-malate + a quinone = a quinol + oxaloacetate. Its pathway is carbohydrate metabolism; tricarboxylic acid cycle; oxaloacetate from (S)-malate (quinone route): step 1/1. The sequence is that of Probable malate:quinone oxidoreductase from Actinobacillus pleuropneumoniae serotype 5b (strain L20).